Reading from the N-terminus, the 126-residue chain is Protein ApaG (126 aa).

The region spanning 2 to 126 (SDPRYQIDVS…FRLAVPGALH (125 aa)) is the ApaG domain.

This Azotobacter vinelandii (strain DJ / ATCC BAA-1303) protein is Protein ApaG.